We begin with the raw amino-acid sequence, 243 residues long: DNA repair protein RecO (243 aa).

The protein belongs to the RecO family.

Its function is as follows. Involved in DNA repair and RecF pathway recombination. The chain is DNA repair protein RecO from Caulobacter sp. (strain K31).